Here is a 219-residue protein sequence, read N- to C-terminus: Claudin-20 (219 aa).

The Cytoplasmic segment spans residues 1–7 (MASAGLQ). A helical transmembrane segment spans residues 8–28 (LLAFILALSGVSGVLTATLLP). Over 29 to 81 (NWKVNVDVDSNIITAIVQLHGLWMDCTWYSTGMFSCALKHSILSLPIHVQAAR) the chain is Extracellular. A helical transmembrane segment spans residues 82-102 (ATMVLACVLSALGICTSTVGM). At 103–118 (KCTRLGGDRETKSHAS) the chain is on the cytoplasmic side. Residues 119 to 139 (FAGGVCFMSAGISSLISTVWY) traverse the membrane as a helical segment. Residues 140–160 (TKEIIANFLDLTVPESNKHEP) are Extracellular-facing. A helical membrane pass occupies residues 161–181 (GGAIYIGFISAMLLFISGMIF). The Cytoplasmic segment spans residues 182–219 (CTSCIKRNPEARLDPPTQQPISNTQLENNSTHNLKDYV). Residues 193 to 219 (RLDPPTQQPISNTQLENNSTHNLKDYV) are disordered. A compositionally biased stretch (polar residues) spans 200 to 213 (QPISNTQLENNSTH).

It belongs to the claudin family.

The protein localises to the cell junction. Its subcellular location is the tight junction. It localises to the cell membrane. Its function is as follows. Plays a major role in tight junction-specific obliteration of the intercellular space, through calcium-independent cell-adhesion activity. The chain is Claudin-20 (CLDN20) from Homo sapiens (Human).